Here is a 1185-residue protein sequence, read N- to C-terminus: 205 kDa microtubule-associated protein (1185 aa).

Residues 146 to 159 (EPNQLPEQLQQQQQ) are compositionally biased toward low complexity. A disordered region spans residues 146 to 196 (EPNQLPEQLQQQQQIESQGVHEDPRQEDEDEHSSVATTYGTSSLSENNSSP). Residues 179–196 (SVATTYGTSSLSENNSSP) show a composition bias toward polar residues. Phosphoserine occurs at positions 354 and 448. Residue Tyr450 is modified to Phosphotyrosine. 3 positions are modified to phosphoserine: Ser709, Ser710, and Ser712. Thr721 is subject to Phosphothreonine. Position 728 is a phosphoserine (Ser728). Positions 745–977 (TAADGQSISQ…ASTKVRPAAT (233 aa)) are microtubule-binding. Low complexity predominate over residues 856–866 (SIATKTSTTSS). 2 disordered regions span residues 856–1035 (SIAT…TSTA) and 1054–1114 (SASL…SSPA). Polar residues-rich tracts occupy residues 867 to 881 (LTGN…NVGS) and 908 to 936 (TITN…STNA). Position 874 is a phosphoserine (Ser874). The segment covering 940-952 (ATSGTGSVASSTA) has biased composition (low complexity). The span at 989 to 999 (PRSTISSTTTV) shows a compositional bias: polar residues. Over residues 1003–1015 (PSTSTPSFSTRSP) the composition is skewed to low complexity. Polar residues-rich tracts occupy residues 1016 to 1026 (NKQQSNGLGKN) and 1054 to 1066 (SASL…STSR). A phosphoserine mark is found at Ser1075 and Ser1086. Polar residues predominate over residues 1100–1111 (LTPQSKDGTAKS). Ser1121 carries the post-translational modification Phosphoserine.

Its subcellular location is the cytoplasm. It localises to the cytoskeleton. The protein resides in the spindle. Functionally, may play an important role in the regulation of microtubule assembly and interaction. The chain is 205 kDa microtubule-associated protein (Map205) from Drosophila melanogaster (Fruit fly).